Reading from the N-terminus, the 448-residue chain is RING finger protein 44 (448 aa).

The RING-type; atypical zinc finger occupies C396 to R437.

The polypeptide is RING finger protein 44 (rnf44) (Danio rerio (Zebrafish)).